Consider the following 179-residue polypeptide: UPF0227 protein Ssed_2836 (179 aa).

Belongs to the UPF0227 family.

This Shewanella sediminis (strain HAW-EB3) protein is UPF0227 protein Ssed_2836.